Consider the following 253-residue polypeptide: uncharacterized protein (253 aa).

The first 19 residues, 1–19 (MHYLKKVTIYISLLILVSG), serve as a signal peptide directing secretion. Residue Cys20 is the site of N-palmitoyl cysteine attachment. Cys20 carries the S-diacylglycerol cysteine lipid modification.

Belongs to the staphylococcal tandem lipoprotein family.

Its subcellular location is the cell membrane. This is an uncharacterized protein from Staphylococcus epidermidis (strain ATCC 35984 / DSM 28319 / BCRC 17069 / CCUG 31568 / BM 3577 / RP62A).